The primary structure comprises 68 residues: Sec-independent protein translocase protein TatA (68 aa).

The chain crosses the membrane as a helical span at residues 1 to 21; the sequence is MGSFSIWHWLIVLAVVLLLFG. Residues 48-68 are disordered; it reads AAAADKSIDGKTVDHKSDEVR. Positions 53 to 68 are enriched in basic and acidic residues; that stretch reads KSIDGKTVDHKSDEVR.

It belongs to the TatA/E family. In terms of assembly, the Tat system comprises two distinct complexes: a TatABC complex, containing multiple copies of TatA, TatB and TatC subunits, and a separate TatA complex, containing only TatA subunits. Substrates initially bind to the TatABC complex, which probably triggers association of the separate TatA complex to form the active translocon.

Its subcellular location is the cell inner membrane. Its function is as follows. Part of the twin-arginine translocation (Tat) system that transports large folded proteins containing a characteristic twin-arginine motif in their signal peptide across membranes. TatA could form the protein-conducting channel of the Tat system. The protein is Sec-independent protein translocase protein TatA of Sinorhizobium medicae (strain WSM419) (Ensifer medicae).